The following is a 31-amino-acid chain: Cytochrome b6-f complex subunit 8 (31 aa).

The helical transmembrane segment at 5–25 threads the bilayer; the sequence is IVSLAWAALMVVFTFSLSLVV.

This sequence belongs to the PetN family. In terms of assembly, the 4 large subunits of the cytochrome b6-f complex are cytochrome b6, subunit IV (17 kDa polypeptide, PetD), cytochrome f and the Rieske protein, while the 4 small subunits are PetG, PetL, PetM and PetN. The complex functions as a dimer.

The protein localises to the plastid. It localises to the chloroplast thylakoid membrane. In terms of biological role, component of the cytochrome b6-f complex, which mediates electron transfer between photosystem II (PSII) and photosystem I (PSI), cyclic electron flow around PSI, and state transitions. The polypeptide is Cytochrome b6-f complex subunit 8 (Acorus calamus (Sweet flag)).